The sequence spans 473 residues: Photosystem II CP43 reaction center protein (473 aa).

Positions 1 to 14 (MKTLYSLRRFYHVE) are excised as a propeptide. An N-acetylthreonine modification is found at Thr15. Position 15 is a phosphothreonine (Thr15). 5 helical membrane-spanning segments follow: residues 69–93 (LFEV…PHLA), 134–155 (LLGP…KDRN), 178–200 (KALY…RKIT), 255–275 (KPFA…LSYS), and 291–312 (CFNN…ASQA). Glu367 serves as a coordination point for [CaMn4O5] cluster. The helical transmembrane segment at 447–471 (RARAAAAGFEKGIDRDFEPVLSMTP) threads the bilayer.

This sequence belongs to the PsbB/PsbC family. PsbC subfamily. PSII is composed of 1 copy each of membrane proteins PsbA, PsbB, PsbC, PsbD, PsbE, PsbF, PsbH, PsbI, PsbJ, PsbK, PsbL, PsbM, PsbT, PsbX, PsbY, PsbZ, Psb30/Ycf12, at least 3 peripheral proteins of the oxygen-evolving complex and a large number of cofactors. It forms dimeric complexes. Binds multiple chlorophylls and provides some of the ligands for the Ca-4Mn-5O cluster of the oxygen-evolving complex. It may also provide a ligand for a Cl- that is required for oxygen evolution. PSII binds additional chlorophylls, carotenoids and specific lipids. serves as cofactor.

Its subcellular location is the plastid. It localises to the chloroplast thylakoid membrane. In terms of biological role, one of the components of the core complex of photosystem II (PSII). It binds chlorophyll and helps catalyze the primary light-induced photochemical processes of PSII. PSII is a light-driven water:plastoquinone oxidoreductase, using light energy to abstract electrons from H(2)O, generating O(2) and a proton gradient subsequently used for ATP formation. The protein is Photosystem II CP43 reaction center protein of Jasminum nudiflorum (Winter jasmine).